We begin with the raw amino-acid sequence, 668 residues long: uncharacterized protein (668 aa).

9 consecutive transmembrane segments (helical) span residues 182–202, 208–228, 286–306, 321–341, 379–399, 430–450, 499–519, 557–577, and 587–607; these read FAFADFFKTGVFVLSFWGILG, PYSYIFAIGVALWGAFFIQFW, VPLFLISGCILLFLIAIAFIV, IVSLLPAVVFQVLTLPFTFIY, ALFLISYIYGPFAEYFVPHYI, IYFLTNAQVINYITILAVPQL, FVLMFGFLVMFSPIYPLAPIF, LSLLSWLGCITMPSICYFYSS, and VIAAVIGLLSEHLWFLLRMFI.

The protein localises to the membrane. This is an uncharacterized protein from Schizosaccharomyces pombe (strain 972 / ATCC 24843) (Fission yeast).